The following is a 397-amino-acid chain: Phosphoglycerate kinase (397 aa).

Substrate-binding positions include 21–23 (DFN), Arg37, 60–63 (HLGR), Arg119, and Arg152. ATP is bound by residues Lys203, Gly294, Glu325, and 354–357 (GGDS).

Belongs to the phosphoglycerate kinase family. In terms of assembly, monomer.

The protein resides in the cytoplasm. It catalyses the reaction (2R)-3-phosphoglycerate + ATP = (2R)-3-phospho-glyceroyl phosphate + ADP. The protein operates within carbohydrate degradation; glycolysis; pyruvate from D-glyceraldehyde 3-phosphate: step 2/5. In Chlorobium phaeobacteroides (strain DSM 266 / SMG 266 / 2430), this protein is Phosphoglycerate kinase.